A 369-amino-acid chain; its full sequence is Coiled-coil domain-containing protein 130 homolog (369 aa).

Residues 233–263 are compositionally biased toward basic and acidic residues; the sequence is TRYRDTKTHDDHLESSRDRIESRRIFRRPEE. Positions 233–369 are disordered; that stretch reads TRYRDTKTHD…EYGNSSDDSD (137 aa). Over residues 266-282 the composition is skewed to low complexity; the sequence is TPSTSSGSSGGAVPSAS. Residues 283–297 are compositionally biased toward basic and acidic residues; sequence ERLKATMKAERDKRI. A compositionally biased stretch (low complexity) spans 299–310; the sequence is ASFSTAGTSSAT.

Belongs to the CWC16 family.

This chain is Coiled-coil domain-containing protein 130 homolog, found in Caenorhabditis elegans.